The following is a 20-amino-acid chain: DSVGSTTAHKQQNINHLLDK.

The tract at residues 1 to 20 is disordered; it reads DSVGSTTAHKQQNINHLLDK.

Belongs to the tyrosinase family. Hemocyanin subfamily. Composed of 3 major subunits (IB, II and III) and 1 minor subunit (IA) which form homohexamers and heterohexamers. May also form larger structures. In terms of tissue distribution, hemolymph.

It localises to the secreted. The protein resides in the extracellular space. Its function is as follows. Hemocyanins are copper-containing oxygen carriers occurring freely dissolved in the hemolymph of many mollusks and arthropods. The polypeptide is Hemocyanin subunit Ib (Panulirus japonicus (Japanese spiny lobster)).